The chain runs to 98 residues: Small ribosomal subunit protein bS20 (98 aa).

It belongs to the bacterial ribosomal protein bS20 family.

In terms of biological role, binds directly to 16S ribosomal RNA. The protein is Small ribosomal subunit protein bS20 of Prochlorococcus marinus (strain NATL1A).